Here is a 241-residue protein sequence, read N- to C-terminus: Cell division cycle-associated protein 4 (241 aa).

The SERTA domain maps to 30 to 77 (YSLQRQSLLDMSLVKLQLCHMLVEPNLCRSVLIANTVRQIQEEMTQDG).

As to expression, highest levels of expression in the pancreas, thymus, testis, spleen, liver, placenta and leukocytes. Relatively low levels in the lung, kidney, prostate, ovary, small intestine and colon. Hardly detectable, if at all, in the brain, skeletal muscle and heart.

It is found in the nucleus. Functionally, may participate in the regulation of cell proliferation through the E2F/RB pathway. May be involved in molecular regulation of hematopoietic stem cells and progenitor cell lineage commitment and differentiation. This chain is Cell division cycle-associated protein 4 (CDCA4), found in Homo sapiens (Human).